Here is a 445-residue protein sequence, read N- to C-terminus: Phosphoglucosamine mutase (445 aa).

The active-site Phosphoserine intermediate is S99. Mg(2+)-binding residues include S99, D242, D244, and D246. A Phosphoserine modification is found at S99.

The protein belongs to the phosphohexose mutase family. Requires Mg(2+) as cofactor. Activated by phosphorylation.

The catalysed reaction is alpha-D-glucosamine 1-phosphate = D-glucosamine 6-phosphate. Its function is as follows. Catalyzes the conversion of glucosamine-6-phosphate to glucosamine-1-phosphate. The polypeptide is Phosphoglucosamine mutase (Helicobacter pylori (strain Shi470)).